We begin with the raw amino-acid sequence, 707 residues long: Alpha-hemolysin translocation ATP-binding protein HlyB (707 aa).

Residues Asp-2–Ile-125 enclose the Peptidase C39 domain. His-83 is a catalytic residue. Residues Phe-154 to Gln-436 form the ABC transmembrane type-1 domain. Helical transmembrane passes span Leu-158 to Val-178, Leu-191 to Leu-211, Ala-269 to Tyr-289, Leu-295 to Leu-315, and Ala-387 to Ile-407. The ABC transporter domain occupies Ile-468–Gln-703. Residue Gly-502–Ser-509 coordinates ATP.

This sequence belongs to the ABC transporter superfamily. Protein-1 exporter (TC 3.A.1.109) family.

Its subcellular location is the cell membrane. Involved in the export of hemolysin A. This Proteus vulgaris protein is Alpha-hemolysin translocation ATP-binding protein HlyB (hlyB).